A 347-amino-acid polypeptide reads, in one-letter code: MAVSGFEGFEKRLELRFFDDDKPITKNPMGLRLIDFESLDQVLNEVQCTVVSAVANRSFDAYVLSESSLFVYPTKIIIKTCGTTQLLKSIRPLIHLARNLGLTLRACRYSRGSFIFPKAQPFPYTSFKDEVIVVEESLPKSLCYRKASVMTPSNNPSRAWHVFTASADVESDEHVVVVEVCMTELDRVNARSFFKRKGDEKNNSDSAGKEMTRLSGIDNINANAYICDFAFDPCGYSMNGVDGDRYSTIHVTPEDGFSYASFECGLSLYDNGHEDISEVLSRAIDVFRPSDVSIATTYGGEDYNHEVTKRVERVLAKKLDLKCRSRLMDEFPGSGTVVYQSFTPRRK.

Catalysis depends on residues Glu7 and Glu10. Residue Glu66 participates in substrate binding. Ser67 (schiff-base intermediate with substrate; via pyruvic acid) is an active-site residue. The residue at position 67 (Ser67) is a Pyruvic acid (Ser); by autocatalysis. Catalysis depends on Cys81, which acts as the Proton donor; for catalytic activity. Residues Ser237 and His250 each act as proton acceptor; for processing activity in the active site. Glu254 contributes to the substrate binding site.

The protein belongs to the eukaryotic AdoMetDC family. Requires pyruvate as cofactor. Post-translationally, is synthesized initially as an inactive proenzyme. Formation of the active enzyme involves a self-maturation process in which the active site pyruvoyl group is generated from an internal serine residue via an autocatalytic post-translational modification. Two non-identical subunits are generated from the proenzyme in this reaction, and the pyruvate is formed at the N-terminus of the alpha chain, which is derived from the carboxyl end of the proenzyme. The post-translation cleavage follows an unusual pathway, termed non-hydrolytic serinolysis, in which the side chain hydroxyl group of the serine supplies its oxygen atom to form the C-terminus of the beta chain, while the remainder of the serine residue undergoes an oxidative deamination to produce ammonia and the pyruvoyl group blocking the N-terminus of the alpha chain.

The catalysed reaction is S-adenosyl-L-methionine + H(+) = S-adenosyl 3-(methylsulfanyl)propylamine + CO2. The protein operates within amine and polyamine biosynthesis; S-adenosylmethioninamine biosynthesis; S-adenosylmethioninamine from S-adenosyl-L-methionine: step 1/1. Functionally, essential for biosynthesis of the polyamines spermidine and spermine. Essential for polyamine homeostasis, and normal plant embryogenesis, growth and development. The sequence is that of S-adenosylmethionine decarboxylase proenzyme 4 from Arabidopsis thaliana (Mouse-ear cress).